Here is a 914-residue protein sequence, read N- to C-terminus: Probable dipeptidyl-aminopeptidase B (914 aa).

Acidic residues predominate over residues 1-10 (MGKSEADEDA). Positions 1–81 (MGKSEADEDA…DQPFLPSRKG (81 aa)) are disordered. At 1–89 (MGKSEADEDA…KGSGARARRV (89 aa)) the chain is on the cytoplasmic side. Low complexity predominate over residues 20–34 (SSSAASQTSSDSGLS). The chain crosses the membrane as a helical; Signal-anchor for type II membrane protein span at residues 90-110 (FWGLLLLCLAGWVLAFVLFLI). Residues 111-914 (QGRSGYSATS…FKRALPVFVH (804 aa)) are Vacuolar-facing. N-linked (GlcNAc...) asparagine glycans are attached at residues asparagine 347 and asparagine 638. The Charge relay system role is filled by serine 752. Residue asparagine 806 is glycosylated (N-linked (GlcNAc...) asparagine). Residues aspartate 829 and histidine 862 each act as charge relay system in the active site.

It belongs to the peptidase S9B family.

It localises to the vacuole membrane. The catalysed reaction is Release of an N-terminal dipeptide, Xaa-Yaa-|-Zaa-, from a polypeptide, preferentially when Yaa is Pro, provided Zaa is neither Pro nor hydroxyproline.. Its function is as follows. Type IV dipeptidyl-peptidase which removes N-terminal dipeptides sequentially from polypeptides having unsubstituted N-termini provided that the penultimate residue is proline. The polypeptide is Probable dipeptidyl-aminopeptidase B (dapB) (Aspergillus terreus (strain NIH 2624 / FGSC A1156)).